Consider the following 366-residue polypeptide: 15-cis-zeta-carotene isomerase, chloroplastic (366 aa).

The N-terminal 45 residues, 1–45 (MASQLRLHLAATPPLLPHRRPHLARPLCPTLNPIRAPLPPLSRVL), are a transit peptide targeting the chloroplast. Helical transmembrane passes span 94–114 (SWAY…VLWI), 136–156 (EVVM…MASL), 171–191 (VLFA…FINH), 203–223 (GITG…FFLY), 260–280 (VIWC…AASV), and 338–358 (LPYV…PLMQ).

In terms of tissue distribution, expressed in leaves and roots, and at lower levels in embryos and endosperm.

The protein localises to the plastid. Its subcellular location is the chloroplast membrane. It catalyses the reaction 9,9',15-tri-cis-zeta-carotene = 9,9'-di-cis-zeta-carotene. Its function is as follows. Isomerase involved in the biosynthesis of carotenoids. Catalyzes the cis- to trans-conversion of the 15-cis-bond in 9,15,9'-tri-cis-zeta-carotene. The chain is 15-cis-zeta-carotene isomerase, chloroplastic from Zea mays (Maize).